The sequence spans 615 residues: Leucine aminopeptidase 2-1 (615 aa).

Substrate-binding positions include 137 to 139 and 261 to 266; these read QCQ and PYGGME. Histidine 290 lines the Zn(2+) pocket. Glutamate 291 (proton acceptor) is an active-site residue. Zn(2+)-binding residues include histidine 294 and glutamate 313. Tyrosine 380 (proton donor) is an active-site residue.

This sequence belongs to the peptidase M1 family. Zn(2+) serves as cofactor.

Its subcellular location is the cytoplasm. The protein localises to the nucleus. It carries out the reaction an epoxide + H2O = an ethanediol. In terms of biological role, aminopeptidase that preferentially cleaves di- and tripeptides. Also has low epoxide hydrolase activity (in vitro). Can hydrolyze the epoxide leukotriene LTA(4) but it forms preferentially 5,6-dihydroxy-7,9,11,14-eicosatetraenoic acid rather than the cytokine leukotriene B(4) as the product compared to the homologous mammalian enzyme (in vitro). The sequence is that of Leucine aminopeptidase 2-1 from Meyerozyma guilliermondii (strain ATCC 6260 / CBS 566 / DSM 6381 / JCM 1539 / NBRC 10279 / NRRL Y-324) (Yeast).